Here is a 347-residue protein sequence, read N- to C-terminus: Vitellogenin-3 (347 aa).

Residues 1–15 form the signal peptide; that stretch reads MRGFILALVLALVGA. N-linked (GlcNAc...) asparagine glycosylation is present at Asn80. The segment covering 104-118 has biased composition (low complexity); the sequence is PSATPLSSSSSTDSS. Disordered stretches follow at residues 104–174 and 200–234; these read PSAT…DKHC and QDPR…MFLG. Residues 124 to 133 are compositionally biased toward basic and acidic residues; sequence PGNKRDKDEI. The segment covering 144–163 has biased composition (low complexity); it reads SSSSSSSSSTGSGSSKTCSS. Residues 164–174 show a composition bias toward basic and acidic residues; the sequence is SREDSSRDKHC. Asn208 carries N-linked (GlcNAc...) asparagine glycosylation. A compositionally biased stretch (low complexity) spans 209–219; that stretch reads SSISSSSSSSS.

Phosvitin, an egg yolk storage protein, is one of the most highly phosphorylated (10%) proteins in nature. In terms of processing, cathepsin D is responsible for intraoocytic processing of vitellogenin. Post-translationally, may contain intrachain disulfide bonds. Produced by the liver, secreted into the blood and then sequestered by receptor mediated endocytosis into growing oocytes, where it is generally cleaved, giving rise to the respective yolk components.

Its function is as follows. Precursor of the egg-yolk proteins that are sources of nutrients during early development of oviparous organisms. In terms of biological role, phosvitin is believed to be of importance in sequestering calcium, iron and other cations for the developing embryo. The polypeptide is Vitellogenin-3 (VTG3) (Gallus gallus (Chicken)).